Reading from the N-terminus, the 85-residue chain is Large ribosomal subunit protein bL31B (85 aa).

This sequence belongs to the bacterial ribosomal protein bL31 family. Type B subfamily. Part of the 50S ribosomal subunit.

In Macrococcus caseolyticus (strain JCSC5402) (Macrococcoides caseolyticum), this protein is Large ribosomal subunit protein bL31B.